Reading from the N-terminus, the 250-residue chain is Diphthine synthase (250 aa).

S-adenosyl-L-methionine-binding positions include L9, D85, V88, 113–114 (SI), L165, A202, and H227.

This sequence belongs to the diphthine synthase family. In terms of assembly, homodimer.

It catalyses the reaction 2-[(3S)-amino-3-carboxypropyl]-L-histidyl-[translation elongation factor 2] + 3 S-adenosyl-L-methionine = diphthine-[translation elongation factor 2] + 3 S-adenosyl-L-homocysteine + 3 H(+). Its pathway is protein modification; peptidyl-diphthamide biosynthesis. In terms of biological role, S-adenosyl-L-methionine-dependent methyltransferase that catalyzes the trimethylation of the amino group of the modified target histidine residue in translation elongation factor 2 (EF-2), to form an intermediate called diphthine. The three successive methylation reactions represent the second step of diphthamide biosynthesis. This Methanoregula boonei (strain DSM 21154 / JCM 14090 / 6A8) protein is Diphthine synthase.